Consider the following 1841-residue polypeptide: Sucrase-isomaltase, intestinal (1841 aa).

Residues 1 to 12 are Cytoplasmic-facing; the sequence is MAKKKFSALEIS. Serine 7 carries the phosphoserine; by PKA modification. Residues 13–32 form a helical; Signal-anchor for type II membrane protein membrane-spanning segment; it reads LIVLFIIVTAIAIALVTVLA. The Lumenal segment spans residues 33 to 1841; it reads TKVPAVEEIK…LDEPIQITWS (1809 aa). Positions 42-81 are disordered; sequence KSPTPTSNSTPTSTPTSTSTPTSTSTPSPGKCPPEQGEPI. Residues 43–70 are compositionally biased toward low complexity; it reads SPTPTSNSTPTSTPTSTSTPTSTSTPSP. The P-type 1 domain maps to 71 to 120; that stretch reads GKCPPEQGEPINERINCIPEQHPTKAICEERGCCWRPWNNTVIPWCFFAD. 3 cysteine pairs are disulfide-bonded: cysteine 73-cysteine 104, cysteine 87-cysteine 103, and cysteine 98-cysteine 116. Asparagine 109 is a glycosylation site (N-linked (GlcNAc...) asparagine). The segment at 120-1013 is isomaltase; it reads DNHGYNAESI…ELQLNPPNAR (894 aa). 2 residues coordinate substrate: aspartate 274 and aspartate 398. Residues tyrosine 401 and tyrosine 410 each carry the sulfotyrosine modification. An N-linked (GlcNAc...) asparagine glycan is attached at asparagine 464. The active-site Nucleophile; for isomaltase activity is aspartate 514. Arginine 599 lines the substrate pocket. Residue aspartate 615 is the For isomaltase activity of the active site. Cysteines 646 and 657 form a disulfide. A substrate-binding site is contributed by histidine 673. Asparagine 758, asparagine 765, asparagine 867, and asparagine 910 each carry an N-linked (GlcNAc...) asparagine glycan. Positions 936 to 984 constitute a P-type 2 domain; the sequence is RWCRTFSDNEKFTCYPDVGTATEGTCTQRGCLWQPVSGLSNVPPYYFPP. The segment at 1014–1841 is sucrase; the sequence is IKLPSNPIST…LDEPIQITWS (828 aa). Residues asparagine 1240, asparagine 1308, asparagine 1345, asparagine 1359, and asparagine 1373 are each glycosylated (N-linked (GlcNAc...) asparagine). Position 1387 is a sulfotyrosine (tyrosine 1387). Residue aspartate 1399 is the Nucleophile; for sucrase activity of the active site. The For sucrase activity role is filled by glutamate 1402. Residue asparagine 1485 is glycosylated (N-linked (GlcNAc...) asparagine). Aspartate 1512 serves as the catalytic Proton donor; for sucrase activity. N-linked (GlcNAc...) asparagine glycosylation is found at asparagine 1513, asparagine 1575, asparagine 1762, and asparagine 1829.

Belongs to the glycosyl hydrolase 31 family. In terms of assembly, the resulting sucrase and isomaltase subunits stay associated with one another in a complex by non-covalent linkages. Post-translationally, the precursor is proteolytically cleaved when exposed to pancreatic proteases in the intestinal lumen. Sulfated.

Its subcellular location is the apical cell membrane. The catalysed reaction is Hydrolysis of sucrose and maltose by an alpha-D-glucosidase-type action.. It carries out the reaction Hydrolysis of (1-&gt;6)-alpha-D-glucosidic linkages in some oligosaccharides produced from starch and glycogen by alpha-amylase, and in isomaltose.. Plays an important role in the final stage of carbohydrate digestion. Isomaltase activity is specific for both alpha-1,4- and alpha-1,6-oligosaccharides. The chain is Sucrase-isomaltase, intestinal (Si) from Rattus norvegicus (Rat).